Reading from the N-terminus, the 372-residue chain is N-methyl-L-tryptophan oxidase (372 aa).

An FAD-binding site is contributed by 4–34; the sequence is DLIIIGSGSVGAAAGYYATRAGLNVLMTDAH. C308 is subject to S-8alpha-FAD cysteine.

This sequence belongs to the MSOX/MTOX family. MTOX subfamily. As to quaternary structure, monomer. It depends on FAD as a cofactor.

The catalysed reaction is N(alpha)-methyl-L-tryptophan + O2 + H2O = L-tryptophan + formaldehyde + H2O2. Functionally, catalyzes the oxidative demethylation of N-methyl-L-tryptophan. The polypeptide is N-methyl-L-tryptophan oxidase (Shigella dysenteriae serotype 1 (strain Sd197)).